We begin with the raw amino-acid sequence, 637 residues long: Interleukin-17 receptor E (637 aa).

The first 23 residues, 1–23 (MGSPRLAALLLSLPLLLIGLAVS), serve as a signal peptide directing secretion. The Extracellular portion of the chain corresponds to 24–414 (ARVACPCLRS…VLCPDVSHRH (391 aa)). Residues 87–134 (GSPSLSEESHRISIPSSAISHRGQRTKRAQPSAAEGREHLPEAGSQKC) are disordered. 2 N-linked (GlcNAc...) asparagine glycosylation sites follow: N278 and N307. The helical transmembrane segment at 415 to 435 (LGLLILALLALTALVGVVLVL) threads the bilayer. Over 436-637 (LGRRLLPGSG…TNSPCGFSCL (202 aa)) the chain is Cytoplasmic. Residues 447-583 (TRPVLLLHAA…LLRDLPRLLR (137 aa)) enclose the SEFIR domain.

Forms heterodimers with IL17RA; the heterodimer binds IL17C. As to expression, predominantly expressed in mucosal tissues, including trachea, lung, kidney and stomach. Highly expressed in colon epithelial cells. Also expressed in testis. Low expression, if any, in heart, liver, spleen, or brain. Among CD4 T-helper cells, expressed at high levels in Th17 cells.

The protein localises to the cell membrane. It is found in the secreted. It localises to the cytoplasm. In terms of biological role, specific functional receptor for IL17C, signaling through the NF-kappa-B and MAPK pathways. Requires TRAF3IP2 /ACT1 for signaling. Crucial regulator in innate immunity to bacterial pathogens, such as Citrobacter rodentium. Isoform 4 and isoform 5 may be either cytoplasmic inactive or dominant active forms. Isoform 2 and isoform 3 may act as soluble decoy receptors. The sequence is that of Interleukin-17 receptor E (Il17re) from Mus musculus (Mouse).